A 408-amino-acid polypeptide reads, in one-letter code: Arginine biosynthesis bifunctional protein ArgJ (408 aa).

Residues T156, K182, T193, E279, N403, and S408 each contribute to the substrate site. Catalysis depends on T193, which acts as the Nucleophile.

Belongs to the ArgJ family. Heterotetramer of two alpha and two beta chains.

Its subcellular location is the cytoplasm. It carries out the reaction N(2)-acetyl-L-ornithine + L-glutamate = N-acetyl-L-glutamate + L-ornithine. The catalysed reaction is L-glutamate + acetyl-CoA = N-acetyl-L-glutamate + CoA + H(+). It participates in amino-acid biosynthesis; L-arginine biosynthesis; L-ornithine and N-acetyl-L-glutamate from L-glutamate and N(2)-acetyl-L-ornithine (cyclic): step 1/1. The protein operates within amino-acid biosynthesis; L-arginine biosynthesis; N(2)-acetyl-L-ornithine from L-glutamate: step 1/4. Functionally, catalyzes two activities which are involved in the cyclic version of arginine biosynthesis: the synthesis of N-acetylglutamate from glutamate and acetyl-CoA as the acetyl donor, and of ornithine by transacetylation between N(2)-acetylornithine and glutamate. The protein is Arginine biosynthesis bifunctional protein ArgJ of Bordetella pertussis (strain Tohama I / ATCC BAA-589 / NCTC 13251).